The sequence spans 355 residues: uncharacterized protein (355 aa).

58–65 (GYIIFGIK) provides a ligand contact to ATP.

This is an uncharacterized protein from Ureaplasma parvum serovar 3 (strain ATCC 700970).